Reading from the N-terminus, the 409-residue chain is Probable ATP-dependent RNA helicase MG308 homolog (409 aa).

In terms of domain architecture, Helicase ATP-binding spans 26–179 (VFKVWPRQNV…RKQVAPLTVV (154 aa)). 39–46 (AETGSGKT) is a binding site for ATP. A DEVD box motif is present at residues 126–129 (DEVD). Positions 190–349 (LVKHFLLNLN…SVHLERDGTL (160 aa)) constitute a Helicase C-terminal domain.

Belongs to the DEAD box helicase family.

It carries out the reaction ATP + H2O = ADP + phosphate + H(+). This is Probable ATP-dependent RNA helicase MG308 homolog from Mycoplasma pneumoniae (strain ATCC 29342 / M129 / Subtype 1) (Mycoplasmoides pneumoniae).